The sequence spans 317 residues: Succinate receptor 1 (317 aa).

The Extracellular segment spans residues 1–23; it reads MAQNLSCENWLATEAILNKYYLS. Residue N4 is glycosylated (N-linked (GlcNAc...) asparagine). Residues 24 to 47 traverse the membrane as a helical segment; the sequence is AFYAIEFIFGLLGNVTVVFGYLFC. The Cytoplasmic portion of the chain corresponds to 48 to 55; the sequence is MKNWNSSN. A helical transmembrane segment spans residues 56-76; that stretch reads VYLFNLSISDFAFLCTLPILI. At 77 to 101 the chain is on the extracellular side; the sequence is KSYANDKGTYGDVLCISNRYVLHTN. Residues C91 and C168 are joined by a disulfide bond. The helical transmembrane segment at 102-119 threads the bilayer; the sequence is LYTSILFLTFISMDRYLL. The Cytoplasmic segment spans residues 120–133; it reads MKYPFREHFLQKKE. The chain crosses the membrane as a helical span at residues 134-157; that stretch reads FAILISLAVWALVTLEVLPMLTFI. The Extracellular segment spans residues 158–180; it reads NSVPKEEGSNCIDYASSGNPEHN. The helical transmembrane segment at 181-204 threads the bilayer; that stretch reads LIYSLCLTLLGFLIPLSVMCFFYY. Residues 205–228 lie on the Cytoplasmic side of the membrane; the sequence is KMVVFLKRRSQQQATALPLDKPQR. A helical transmembrane segment spans residues 229–246; sequence LVVLAVVIFSILFTPYHI. The Extracellular portion of the chain corresponds to 247–277; that stretch reads MRNLRIASRLDSWPQGCTQKAIKSIYTLTRP. Residues 278–294 traverse the membrane as a helical segment; it reads LAFLNSAINPIFYFLMG. Over 295–317 the chain is Cytoplasmic; that stretch reads DHYREMLISKFRQYFKSLTSFRT.

This sequence belongs to the G-protein coupled receptor 1 family. In terms of tissue distribution, predominantly expressed in the kidney (proximal and distal tubules and the juxtaglomerular apparatus). Weakly expressed in liver, spleen and small intestine. Highly expressed in immature dendritic cells, expression rapidly downregulates after maturation. Also expressed in macrophages. Specifically expressed in intestinal tuft cells. Expression in whole muscle is attributable to major non-myofibrillar resident cell types, including stromal, endothelial and satellite cell populations.

Its subcellular location is the cell membrane. Its function is as follows. G protein-coupled receptor for succinate able to mediate signaling through Gq/GNAQ or Gi/GNAI second messengers depending on the cell type and the processes regulated. Succinate-SUCNR1 signaling serves as a link between metabolic stress, inflammation and energy homeostasis. In macrophages, plays a range of immune-regulatory roles. During inflammation, succinate-SUCNR1 signaling may act as an anti-inflammatory mediator or boost inflammation depending on the inflammatory status of cells. Hyperpolarizes M2 macrophages versus M1 phenotype through Gq signaling by regulating the transcription of genes involved in immune function. In activated M1 macrophages, plays a pro-inflammatory role in response to LPS. Expressed in dendritic cells, where it is involved in the sensing of immunological danger and enhances immunity. Mediates succinate triggered intracelleular calcium mobilization, induces migratory responses and acts in synergy with Toll-like receptor ligands for the production of proinflammatory cytokines as well as an enhancement of antigen-specific activation of helper T cells. In the small intestine, mediates the activation of tuft cells by dietary succinate and triggers type 2 immunity. In adipocytes, plays an important role in the control of energy metabolism. In response to succinate, controls leptin expression in an AMPK-JNK-CEBPA-dependent as well as circadian clock-regulated manner. In muscle tissue, is expressed in non-muscle cells and coordinates muscle remodeling in response to the succinate produced during exercise training in a paracrine manner. In retina, acts as a mediator of vessel growth during retinal development. In response to succinate, regulates the production of angiogenic factors, including VEGF, by retinal ganglion neurons. The protein is Succinate receptor 1 (Sucnr1) of Mus musculus (Mouse).